The chain runs to 565 residues: Nephronectin (565 aa).

The first 19 residues, 1–19 (MDFLLALVLVSSLYLQAAA), serve as a signal peptide directing secretion. Positions 52–87 (SWGQCQPVCQPRCKHGECIGPNKCKCHPGYAGKTCN) constitute an EGF-like 1 domain. Intrachain disulfides connect Cys-56–Cys-69, Cys-60–Cys-75, Cys-77–Cys-86, Cys-93–Cys-104, Cys-100–Cys-113, and Cys-115–Cys-127. Positions 89 to 128 (DLNECGLKPRPCKHRCMNTYGSYKCYCLNGYMLMPDGSCS) constitute an EGF-like 2; calcium-binding domain. The 37-residue stretch at 132–168 (TCSMANCQYGCDVVKGQIRCQCPSPGLQLAPDGRTCV) folds into the EGF-like 3 domain. In terms of domain architecture, EGF-like 4; calcium-binding spans 169–213 (DVDECATGRASCPRFRQCVNTFGSYICKCHKGFDLMYIGGKYQCH). 6 disulfide bridges follow: Cys-173–Cys-186, Cys-180–Cys-195, Cys-197–Cys-212, Cys-218–Cys-231, Cys-225–Cys-240, and Cys-242–Cys-253. The EGF-like 5; calcium-binding domain maps to 214–254 (DIDECSLGQYQCSSFARCYNIRGSYKCKCKEGYQGDGLTCV). Residues 301 to 389 (YIPPIITNRP…KPRGDVFIPR (89 aa)) are disordered. Over residues 304 to 316 (PIITNRPTSKPTT) the composition is skewed to low complexity. Residues 317–347 (RPTPKPTPIPTPPPPPPLPTELRTPLPPTTP) show a composition bias toward pro residues. The short motif at 382-384 (RGD) is the Integrin interaction element. The region spanning 420 to 563 (HSCNFDHGLC…VSLKKGHCSE (144 aa)) is the MAM domain.

This sequence belongs to the nephronectin family. As to quaternary structure, homodimer and homotrimer. Expressed in kidney and lung and to a lower extent in brain, pregnant uterus, placenta, thyroid gland and blood vessels.

It localises to the secreted. The protein resides in the extracellular space. It is found in the extracellular matrix. Its function is as follows. Functional ligand of integrin alpha-8/beta-1 in kidney development. Regulates the expression of GDNF with integrin alpha-8/beta-1 which is essential for kidney development. May also play a role in the development and function of various tissues, regulating cell adhesion, spreading and survival through the binding of several integrins. This is Nephronectin (NPNT) from Homo sapiens (Human).